The primary structure comprises 231 residues: Ureidoacrylate amidohydrolase RutB (231 aa).

D25 acts as the Proton acceptor in catalysis. K134 is an active-site residue. Residue C167 is the Nucleophile of the active site.

The protein belongs to the isochorismatase family. RutB subfamily.

The catalysed reaction is (Z)-3-ureidoacrylate + H2O + H(+) = (Z)-3-aminoacrylate + NH4(+) + CO2. It catalyses the reaction (Z)-3-ureidoacrylate + H2O = (Z)-3-aminoacrylate + carbamate + H(+). It carries out the reaction (Z)-2-methylureidoacrylate + H2O + H(+) = (Z)-2-methylaminoacrylate + NH4(+) + CO2. Functionally, hydrolyzes ureidoacrylate to form aminoacrylate and carbamate. The carbamate hydrolyzes spontaneously, thereby releasing one of the nitrogen atoms of the pyrimidine ring as ammonia and one of its carbon atoms as CO2. The sequence is that of Ureidoacrylate amidohydrolase RutB from Escherichia coli O9:H4 (strain HS).